A 1079-amino-acid chain; its full sequence is Translation initiation factor IF-2 (1079 aa).

Composition is skewed to basic and acidic residues over residues Val-52–Asn-65, Arg-75–Glu-90, and Ala-102–Gln-134. The segment at Val-52–Ala-488 is disordered. Residues Ala-150–Thr-184 are compositionally biased toward low complexity. Over residues Val-185 to Ala-194 the composition is skewed to basic and acidic residues. The span at Ala-276–Gln-291 shows a compositional bias: low complexity. Residues Gly-306–Gly-327 show a composition bias toward basic and acidic residues. Low complexity-rich tracts occupy residues Glu-348–Pro-370 and Pro-380–Pro-398. A compositionally biased stretch (gly residues) spans Pro-419–Gly-429. The span at Pro-461–Arg-471 shows a compositional bias: basic and acidic residues. A compositionally biased stretch (basic residues) spans Pro-473–Lys-482. The tr-type G domain maps to Thr-578–Glu-745. The interval Gly-587–Thr-594 is G1. Residue Gly-587–Thr-594 coordinates GTP. Residues Gly-612–His-616 are G2. The interval Asp-633–Gly-636 is G3. GTP is bound by residues Asp-633–His-637 and Asn-687–Asp-690. Residues Asn-687–Asp-690 form a G4 region. Residues Ser-723–Lys-725 form a G5 region.

This sequence belongs to the TRAFAC class translation factor GTPase superfamily. Classic translation factor GTPase family. IF-2 subfamily.

Its subcellular location is the cytoplasm. In terms of biological role, one of the essential components for the initiation of protein synthesis. Protects formylmethionyl-tRNA from spontaneous hydrolysis and promotes its binding to the 30S ribosomal subunits. Also involved in the hydrolysis of GTP during the formation of the 70S ribosomal complex. In Nitratidesulfovibrio vulgaris (strain ATCC 29579 / DSM 644 / CCUG 34227 / NCIMB 8303 / VKM B-1760 / Hildenborough) (Desulfovibrio vulgaris), this protein is Translation initiation factor IF-2.